The following is a 429-amino-acid chain: 3-phosphoshikimate 1-carboxyvinyltransferase (429 aa).

3-phosphoshikimate-binding residues include Lys11, Ser12, and Arg16. Lys11 lines the phosphoenolpyruvate pocket. The phosphoenolpyruvate site is built by Gly82 and Arg110. Residues Ser155, Gln157, Asp302, and Lys329 each contribute to the 3-phosphoshikimate site. Gln157 serves as a coordination point for phosphoenolpyruvate. Asp302 serves as the catalytic Proton acceptor. 2 residues coordinate phosphoenolpyruvate: Arg333 and Arg385.

It belongs to the EPSP synthase family. In terms of assembly, monomer.

The protein resides in the cytoplasm. The catalysed reaction is 3-phosphoshikimate + phosphoenolpyruvate = 5-O-(1-carboxyvinyl)-3-phosphoshikimate + phosphate. It participates in metabolic intermediate biosynthesis; chorismate biosynthesis; chorismate from D-erythrose 4-phosphate and phosphoenolpyruvate: step 6/7. Its function is as follows. Catalyzes the transfer of the enolpyruvyl moiety of phosphoenolpyruvate (PEP) to the 5-hydroxyl of shikimate-3-phosphate (S3P) to produce enolpyruvyl shikimate-3-phosphate and inorganic phosphate. The chain is 3-phosphoshikimate 1-carboxyvinyltransferase from Helicobacter pylori (strain G27).